The primary structure comprises 874 residues: Alanine--tRNA ligase (874 aa).

Zn(2+) is bound by residues His562, His566, Cys665, and His669.

It belongs to the class-II aminoacyl-tRNA synthetase family. It depends on Zn(2+) as a cofactor.

It is found in the cytoplasm. It catalyses the reaction tRNA(Ala) + L-alanine + ATP = L-alanyl-tRNA(Ala) + AMP + diphosphate. Functionally, catalyzes the attachment of alanine to tRNA(Ala) in a two-step reaction: alanine is first activated by ATP to form Ala-AMP and then transferred to the acceptor end of tRNA(Ala). Also edits incorrectly charged Ser-tRNA(Ala) and Gly-tRNA(Ala) via its editing domain. This is Alanine--tRNA ligase from Pseudomonas putida (strain W619).